The sequence spans 237 residues: 1-(5-phosphoribosyl)-5-[(5-phosphoribosylamino)methylideneamino] imidazole-4-carboxamide isomerase (237 aa).

Residue Asp8 is the Proton acceptor of the active site. Asp130 acts as the Proton donor in catalysis.

This sequence belongs to the HisA/HisF family.

Its subcellular location is the cytoplasm. It carries out the reaction 1-(5-phospho-beta-D-ribosyl)-5-[(5-phospho-beta-D-ribosylamino)methylideneamino]imidazole-4-carboxamide = 5-[(5-phospho-1-deoxy-D-ribulos-1-ylimino)methylamino]-1-(5-phospho-beta-D-ribosyl)imidazole-4-carboxamide. It participates in amino-acid biosynthesis; L-histidine biosynthesis; L-histidine from 5-phospho-alpha-D-ribose 1-diphosphate: step 4/9. The protein is 1-(5-phosphoribosyl)-5-[(5-phosphoribosylamino)methylideneamino] imidazole-4-carboxamide isomerase of Halothermothrix orenii (strain H 168 / OCM 544 / DSM 9562).